A 662-amino-acid polypeptide reads, in one-letter code: Interferon-induced GTP-binding protein Mx1 (662 aa).

Met1 carries the N-acetylmethionine; in Interferon-induced GTP-binding protein Mx1; alternate modification. Residues 67-340 enclose the Dynamin-type G domain; that stretch reads DLALPAIAVI…LITHICKSLP (274 aa). A G1 motif region spans residues 77 to 84; that stretch reads GDQSSGKS. Residue 77-84 participates in GTP binding; the sequence is GDQSSGKS. A G2 motif region spans residues 102-104; sequence VTR. The segment at 178 to 181 is G3 motif; sequence DLPG. GTP is bound by residues 178–182 and 247–250; these read DLPGI and TKPD. The interval 247–250 is G4 motif; it reads TKPD. The interval 279 to 282 is G5 motif; that stretch reads KCRG. Residues 341–366 are bundle signaling element (BSE); it reads LLENQIKETHQRITEELQKYGVDIPE. The middle domain stretch occupies residues 366–533; that stretch reads EDENEKMFFL…HFQMEQIVYC (168 aa). The interval 367-632 is stalk; sequence DENEKMFFLI…KDTYSWLLKE (266 aa). The critical for lipid-binding stretch occupies residues 554-557; that stretch reads KKKK. The region spanning 574 to 662 is the GED domain; the sequence is MEEIFQHLMA…ARRRLAQFPG (89 aa).

It belongs to the TRAFAC class dynamin-like GTPase superfamily. Dynamin/Fzo/YdjA family. As to quaternary structure, homotetramer. Oligomerizes into multimeric filamentous or ring-like structures by virtue of its stalk domain. Oligomerization is critical for GTPase activity, protein stability, and recognition of viral target structures. Interacts with TRPC1, TRPC3, TRPC4, TRPC5, TRPC6 and TRPC7. Interacts with HSPA5. Interacts with DDX39A and DDX39B. Interacts with TUBB/TUBB5. The GTP-bound form interacts (via C-terminus) with THOV P5 protein. The GTP-bound form interacts with LACV protein N. Interacts with CCHFV protein N. Post-translationally, ISGylated.

It localises to the cytoplasm. The protein resides in the endoplasmic reticulum membrane. The protein localises to the perinuclear region. Its subcellular location is the nucleus. In terms of biological role, interferon-induced dynamin-like GTPase with antiviral activity against a wide range of RNA viruses and some DNA viruses. Its target viruses include negative-stranded RNA viruses and HBV through binding and inactivation of their ribonucleocapsid. May also antagonize reoviridae and asfarviridae replication. Inhibits thogoto virus (THOV) replication by preventing the nuclear import of viral nucleocapsids. Inhibits La Crosse virus (LACV) replication by sequestering viral nucleoprotein in perinuclear complexes, preventing genome amplification, budding, and egress. Inhibits influenza A virus (IAV) replication by decreasing or delaying NP synthesis and by blocking endocytic traffic of incoming virus particles. Enhances ER stress-mediated cell death after influenza virus infection. May regulate the calcium channel activity of TRPCs. This Homo sapiens (Human) protein is Interferon-induced GTP-binding protein Mx1 (MX1).